Consider the following 149-residue polypeptide: Transcriptional regulator MraZ (149 aa).

SpoVT-AbrB domains are found at residues 6 to 52 (RSHR…PLPD) and 81 to 124 (AELM…DQGR).

Belongs to the MraZ family. Forms oligomers.

It localises to the cytoplasm. It is found in the nucleoid. The chain is Transcriptional regulator MraZ from Nitratidesulfovibrio vulgaris (strain DSM 19637 / Miyazaki F) (Desulfovibrio vulgaris).